The primary structure comprises 245 residues: Large ribosomal subunit protein uL2 (245 aa).

Residues 196–226 (SPYAHPHGGGSHQKGGTPVSKTAPPGQKVGF) form a disordered region.

This sequence belongs to the universal ribosomal protein uL2 family. Part of the 50S ribosomal subunit. Forms a bridge to the 30S subunit in the 70S ribosome.

One of the primary rRNA binding proteins. Required for association of the 30S and 50S subunits to form the 70S ribosome, for tRNA binding and peptide bond formation. It has been suggested to have peptidyltransferase activity; this is somewhat controversial. Makes several contacts with the 16S rRNA in the 70S ribosome. In Pyrobaculum neutrophilum (strain DSM 2338 / JCM 9278 / NBRC 100436 / V24Sta) (Thermoproteus neutrophilus), this protein is Large ribosomal subunit protein uL2.